The primary structure comprises 441 residues: Tol-Pal system protein TolB (441 aa).

Residues 1-39 (MPAMTPAFRRADLTGFLRTYGAALILLLAAMLAWQPAQA) form the signal peptide.

It belongs to the TolB family. In terms of assembly, the Tol-Pal system is composed of five core proteins: the inner membrane proteins TolA, TolQ and TolR, the periplasmic protein TolB and the outer membrane protein Pal. They form a network linking the inner and outer membranes and the peptidoglycan layer.

The protein localises to the periplasm. Part of the Tol-Pal system, which plays a role in outer membrane invagination during cell division and is important for maintaining outer membrane integrity. The sequence is that of Tol-Pal system protein TolB from Bordetella parapertussis (strain 12822 / ATCC BAA-587 / NCTC 13253).